Consider the following 645-residue polypeptide: Threonine--tRNA ligase (645 aa).

Residues 1 to 61 (MPVITLPDGS…SDDAKLSIIT (61 aa)) enclose the TGS domain. The interval 243–534 (DHRKLGKKLD…LIEDTEGAFP (292 aa)) is catalytic. Residues cysteine 334, histidine 385, and histidine 511 each coordinate Zn(2+).

Belongs to the class-II aminoacyl-tRNA synthetase family. In terms of assembly, homodimer. Zn(2+) is required as a cofactor.

It is found in the cytoplasm. It carries out the reaction tRNA(Thr) + L-threonine + ATP = L-threonyl-tRNA(Thr) + AMP + diphosphate + H(+). Catalyzes the attachment of threonine to tRNA(Thr) in a two-step reaction: L-threonine is first activated by ATP to form Thr-AMP and then transferred to the acceptor end of tRNA(Thr). Also edits incorrectly charged L-seryl-tRNA(Thr). In Marinomonas sp. (strain MWYL1), this protein is Threonine--tRNA ligase.